The sequence spans 152 residues: Nucleoside diphosphate kinase A (152 aa).

Positions 12, 60, 88, and 94 each coordinate ATP. K100 is covalently cross-linked (Glycyl lysine isopeptide (Lys-Gly) (interchain with G-Cter in ubiquitin)). Positions 105 and 115 each coordinate ATP. H118 serves as the catalytic Pros-phosphohistidine intermediate. 2 positions are modified to phosphoserine: S120 and S122. At K124 the chain carries N6-acetyllysine. The residue at position 125 (S125) is a Phosphoserine.

It belongs to the NDK family. As to quaternary structure, hexamer of two different chains: An and B (A6, A5B, A4B2, A3B3, A2B4, AB5, B6). Interacts with PRUNE1. Component of the SET complex, composed of at least ANP32A, APEX1, HMGB2, NME1, SET and TREX1. Within this complex, interacts directly with SET. Also interacts with TREX1, but only following translocation to the nucleus. Requires Mg(2+) as cofactor.

The protein localises to the cytoplasm. Its subcellular location is the nucleus. It carries out the reaction a 2'-deoxyribonucleoside 5'-diphosphate + ATP = a 2'-deoxyribonucleoside 5'-triphosphate + ADP. The catalysed reaction is a ribonucleoside 5'-diphosphate + ATP = a ribonucleoside 5'-triphosphate + ADP. With respect to regulation, autophosphorylation at His-118 increases serine/threonine protein kinase activity of the enzyme. Interaction with the SET complex inhibits exonuclease activity. Major role in the synthesis of nucleoside triphosphates other than ATP. The ATP gamma phosphate is transferred to the NDP beta phosphate via a ping-pong mechanism, using a phosphorylated active-site intermediate. Possesses nucleoside-diphosphate kinase, serine/threonine-specific protein kinase, geranyl and farnesyl pyrophosphate kinase, histidine protein kinase and 3'-5' exonuclease activities. Involved in cell proliferation, differentiation and development, signal transduction, G protein-coupled receptor endocytosis, and gene expression. Required for neural development including neural patterning and cell fate determination. During GZMA-mediated cell death, works in concert with TREX1. NME1 nicks one strand of DNA and TREX1 removes bases from the free 3' end to enhance DNA damage and prevent DNA end reannealing and rapid repair. The polypeptide is Nucleoside diphosphate kinase A (Nme1) (Mus musculus (Mouse)).